A 270-amino-acid chain; its full sequence is Cyclase-like protein 3 (270 aa).

Positions 1-23 are cleaved as a signal peptide; the sequence is MMAHLAPLFLLLLLLLLPLHAAA.

The protein belongs to the Cyclase 1 superfamily. In terms of tissue distribution, highly expressed in leaf sheaths. leaf collars and flag leaves. Expressed in roots, stems, glumes, young panicles and pistils.

Its subcellular location is the secreted. It is found in the extracellular space. The protein localises to the extracellular matrix. Its function is as follows. May be involved in response to stresses. The chain is Cyclase-like protein 3 from Oryza sativa subsp. japonica (Rice).